The following is a 450-amino-acid chain: tRNA-2-methylthio-N(6)-dimethylallyladenosine synthase (450 aa).

In terms of domain architecture, MTTase N-terminal spans 2-119 (KKVFVKTYGC…LPDLIARRQR (118 aa)). Residues C11, C48, C82, C156, C160, and C163 each contribute to the [4Fe-4S] cluster site. The 234-residue stretch at 142 to 375 (RVEGPSAFVS…QATIEENVQR (234 aa)) folds into the Radical SAM core domain. The region spanning 378–448 (QGMVGTVQRI…PHSLRGEIVV (71 aa)) is the TRAM domain.

Belongs to the methylthiotransferase family. MiaB subfamily. As to quaternary structure, monomer. Requires [4Fe-4S] cluster as cofactor.

It localises to the cytoplasm. The enzyme catalyses N(6)-dimethylallyladenosine(37) in tRNA + (sulfur carrier)-SH + AH2 + 2 S-adenosyl-L-methionine = 2-methylsulfanyl-N(6)-dimethylallyladenosine(37) in tRNA + (sulfur carrier)-H + 5'-deoxyadenosine + L-methionine + A + S-adenosyl-L-homocysteine + 2 H(+). Functionally, catalyzes the methylthiolation of N6-(dimethylallyl)adenosine (i(6)A), leading to the formation of 2-methylthio-N6-(dimethylallyl)adenosine (ms(2)i(6)A) at position 37 in tRNAs that read codons beginning with uridine. This Cupriavidus taiwanensis (strain DSM 17343 / BCRC 17206 / CCUG 44338 / CIP 107171 / LMG 19424 / R1) (Ralstonia taiwanensis (strain LMG 19424)) protein is tRNA-2-methylthio-N(6)-dimethylallyladenosine synthase.